Consider the following 971-residue polypeptide: E3 ubiquitin-protein ligase MIB2 (971 aa).

The MIB/HERC2 1 domain occupies 1–80 (MDLDPHAGVQ…AHDLLLYDNA (80 aa)). The ZZ-type zinc finger occupies 86–138 (HPNIICDCCKKHGLRGMRWKCRVCFDYDLCTQCYMHNKHDLTHAFERYETSHS). Residues C91, C94, C106, C109, C115, C118, H124, and H128 each contribute to the Zn(2+) site. An MIB/HERC2 2 domain is found at 149–227 (LPRIPLRGIF…KVDLKCVGEA (79 aa)). S251 is modified (phosphoserine). ANK repeat units lie at residues 478–507 (QGRT…SVDL), 511–540 (EGNT…GVDA), 544–573 (TRST…DVNL), 577–609 (HADT…DVTA), 613–642 (QGFT…QLVD), 647–677 (DGFT…DVNV), 681–710 (KLQS…NVNT), 714–742 (EGDT…DPGP), and 783–812 (RGRS…ERQA). 2 consecutive RING-type zinc fingers follow at residues 848–883 (CLVC…IRCQ) and 927–960 (CPIC…PICR).

In terms of assembly, interacts with actin monomer. Ubiquitinated. Possibly via autoubiquitination.

The protein localises to the cytoplasm. Its subcellular location is the endosome. It catalyses the reaction S-ubiquitinyl-[E2 ubiquitin-conjugating enzyme]-L-cysteine + [acceptor protein]-L-lysine = [E2 ubiquitin-conjugating enzyme]-L-cysteine + N(6)-ubiquitinyl-[acceptor protein]-L-lysine.. It participates in protein modification; protein ubiquitination. Functionally, E3 ubiquitin-protein ligase that mediates ubiquitination of Delta receptors, which act as ligands of Notch proteins. Positively regulates the Delta-mediated Notch signaling by ubiquitinating the intracellular domain of Delta, leading to endocytosis of Delta receptors. This is E3 ubiquitin-protein ligase MIB2 (Mib2) from Rattus norvegicus (Rat).